Reading from the N-terminus, the 438-residue chain is Nudix hydrolase 19, chloroplastic (438 aa).

A chloroplast-targeting transit peptide spans 1 to 36 (MLALFLSSSSYPTLSFLSRSVTLNLARTTTLSALTM). Residues cysteine 212, cysteine 215, cysteine 230, and cysteine 235 each coordinate Zn(2+). Residues tyrosine 240, 276–278 (AGF), glutamate 292, glutamate 296, and glutamate 342 contribute to the substrate site. Residues 241 to 371 (PRVDPVVIML…EYRKAQRTAA (131 aa)) form the Nudix hydrolase domain. Residues alanine 276, glutamate 292, glutamate 296, and glutamate 342 each contribute to the Mg(2+) site. The Nudix box motif lies at 277-298 (GFIEPGESLEEAVRRETWEETG). Positions 422 to 424 (PDD) match the Microbody targeting signal motif.

This sequence belongs to the Nudix hydrolase family. NudC subfamily. It depends on Mg(2+) as a cofactor. Requires Zn(2+) as cofactor. Expressed in roots, leaves, stems and inflorescences.

The protein resides in the plastid. It is found in the chloroplast. It carries out the reaction a 5'-end NAD(+)-phospho-ribonucleoside in mRNA + H2O = a 5'-end phospho-adenosine-phospho-ribonucleoside in mRNA + beta-nicotinamide D-ribonucleotide + 2 H(+). The enzyme catalyses NAD(+) + H2O = beta-nicotinamide D-ribonucleotide + AMP + 2 H(+). It catalyses the reaction NADH + H2O = reduced beta-nicotinamide D-ribonucleotide + AMP + 2 H(+). In terms of biological role, mRNA decapping enzyme that specifically removes the nicotinamide adenine dinucleotide (NAD) cap from a subset of mRNAs by hydrolyzing the diphosphate linkage to produce nicotinamide mononucleotide (NMN) and 5' monophosphate mRNA. The NAD-cap is present at the 5'-end of some RNAs; in contrast to the canonical N7 methylguanosine (m7G) cap, the NAD cap promotes mRNA decay. Mediates the hydrolysis of some nucleoside diphosphate derivatives. Has a high affinity for NADPH compared with that for NADH. The polypeptide is Nudix hydrolase 19, chloroplastic (NUDT19) (Arabidopsis thaliana (Mouse-ear cress)).